A 296-amino-acid chain; its full sequence is Nucleotide-binding protein ABC3036 (296 aa).

Gly13–Ser20 is a binding site for ATP. Residue Asp64 to Gly67 participates in GTP binding.

The protein belongs to the RapZ-like family.

Its function is as follows. Displays ATPase and GTPase activities. This chain is Nucleotide-binding protein ABC3036, found in Shouchella clausii (strain KSM-K16) (Alkalihalobacillus clausii).